The chain runs to 429 residues: Trigger factor (429 aa).

The PPIase FKBP-type domain occupies glycine 161–leucine 246.

The protein belongs to the FKBP-type PPIase family. Tig subfamily.

It is found in the cytoplasm. It carries out the reaction [protein]-peptidylproline (omega=180) = [protein]-peptidylproline (omega=0). Involved in protein export. Acts as a chaperone by maintaining the newly synthesized protein in an open conformation. Functions as a peptidyl-prolyl cis-trans isomerase. This chain is Trigger factor, found in Vesicomyosocius okutanii subsp. Calyptogena okutanii (strain HA).